A 326-amino-acid polypeptide reads, in one-letter code: MSKIEQSWYQPVSLITILLLPLAALFWLISTLRKWLYTCGILTQFSSKTPVIVVGNISVGGNGKTPFVLWLHAHLTQQGLSVGIISRGYGGHAKQYPLLVDHNSTTLEAGDEPILLYHRLQCPIAVGPNRQQNIELLEQTSAIDVIISDDGMQHYKMARSIECCIVDSARQFGNGLLMPAGPLRETKKRLKSVDLVIENGGNNPQRYNLQPAALKSVLNNSTLTEPILTAHAVSAIGNPLRFEQSLQAQGITLVSTHHYRDHYAYTADDFTQFGDENVLMTEKDAVKCSAFAKQNWYYLPVDAQPTDSVINKLNSLLKDKGILNGL.

58-65 provides a ligand contact to ATP; that stretch reads SVGGNGKT.

This sequence belongs to the LpxK family.

The catalysed reaction is a lipid A disaccharide + ATP = a lipid IVA + ADP + H(+). Its pathway is glycolipid biosynthesis; lipid IV(A) biosynthesis; lipid IV(A) from (3R)-3-hydroxytetradecanoyl-[acyl-carrier-protein] and UDP-N-acetyl-alpha-D-glucosamine: step 6/6. Its function is as follows. Transfers the gamma-phosphate of ATP to the 4'-position of a tetraacyldisaccharide 1-phosphate intermediate (termed DS-1-P) to form tetraacyldisaccharide 1,4'-bis-phosphate (lipid IVA). The sequence is that of Tetraacyldisaccharide 4'-kinase from Pseudoalteromonas translucida (strain TAC 125).